A 407-amino-acid polypeptide reads, in one-letter code: Spore germination protein KC (407 aa).

An N-terminal signal peptide occupies residues 1–20; sequence MVRKCLLAVLMLLSVIVLPG. A lipid anchor (N-palmitoyl cysteine) is attached at C21. A lipid anchor (S-diacylglycerol cysteine) is attached at C21.

This sequence belongs to the GerABKC lipoprotein family.

It localises to the cell membrane. In terms of biological role, involved in the germination response to the combination of glucose, fructose, L-asparagine, and KCl. This is Spore germination protein KC (gerKC) from Bacillus subtilis (strain 168).